Reading from the N-terminus, the 59-residue chain is UPF0434 protein VS_2060 (59 aa).

It belongs to the UPF0434 family.

The sequence is that of UPF0434 protein VS_2060 from Vibrio atlanticus (strain LGP32) (Vibrio splendidus (strain Mel32)).